The chain runs to 898 residues: Endoplasmic reticulum metallopeptidase 1 (898 aa).

Met1 is modified (N-acetylmethionine). Residues 1–59 (MEWSSESAAVRRHRGTAERREGQAAASHPQREASAQEDARGGGRMRGRTESGGESRGAK) form a disordered region. Residues 1-66 (MEWSSESAAV…GAKTALSEAR (66 aa)) lie on the Cytoplasmic side of the membrane. Residues 37 to 57 (EDARGGGRMRGRTESGGESRG) are compositionally biased toward basic and acidic residues. The helical transmembrane segment at 67–87 (TALALALYLLALRALVQLSLQ) threads the bilayer. At 88–393 (RLVLSRTSGL…SSSEYRHGSM (306 aa)) the chain is on the lumenal side. The N-linked (GlcNAc...) asparagine glycan is linked to Asn176. A disulfide bridge connects residues Cys198 and Cys216. Residues His199 and Asp211 each coordinate Zn(2+). The active-site Proton acceptor is the Glu245. Residues Glu246, Glu272, and His348 each coordinate Zn(2+). Residues 394 to 414 (VFFDVLGLLVIAYPSRVGSII) traverse the membrane as a helical segment. Over 415–451 (NYMVVMAVVLYLGRKLLRPNHSNSNYVRDFLCGLGIT) the chain is Cytoplasmic. The chain crosses the membrane as a helical span at residues 452–472 (FISWFTSLVTVLIIAVFVSLI). Residues 473-480 (GQSLSWYN) lie on the Lumenal side of the membrane. Residues 481 to 501 (YFYIAVCLYGTATVAKIILIH) form a helical membrane-spanning segment. Over 502-515 (TLAKRFYYVNASDL) the chain is Cytoplasmic. The helical transmembrane segment at 516–538 (YLGELFFDTSLFVHCGFLVALTA) threads the bilayer. Residues 539-542 (QGFC) lie on the Lumenal side of the membrane. Residues 543-562 (SAFMSAVWVAFPLLTKLCVY) form a helical membrane-spanning segment. Over 563-573 (KDFKKHGAKGR) the chain is Cytoplasmic. A helical transmembrane segment spans residues 574–594 (FIALYLLGMFIPYLYGLYLIW). The Lumenal segment spans residues 595–615 (AVFEMFTPILGRSGSEIPPDV). The chain crosses the membrane as a helical span at residues 616–636 (VLASILAVCVMILSSYFITFI). The Cytoplasmic portion of the chain corresponds to 637 to 645 (YLVNSTKKT). A helical membrane pass occupies residues 646-666 (ILTLILVCAVTFLLVCSGAFF). Topologically, residues 667–898 (PYSSNPDSPK…WVSTYSLFVF (232 aa)) are lumenal. A glycan (N-linked (GlcNAc...) asparagine) is linked at Asn724.

The protein belongs to the peptidase M28 family. The cofactor is Zn(2+). Widely expressed, with highest levels in ovary, kidney, hypothalamus and hippocampus. Within the ovarian follicle, expressed in granulosa cells, but not in oocytes. Present in both preantral and antral follicles, but not in atretic antral follicle.

The protein localises to the endoplasmic reticulum membrane. Within the ovary, required for the organization of somatic cells and oocytes into discrete follicular structures. The chain is Endoplasmic reticulum metallopeptidase 1 from Rattus norvegicus (Rat).